Here is a 314-residue protein sequence, read N- to C-terminus: Dual specificity protein phosphatase 2 (314 aa).

The Rhodanese domain occupies 23–144 (EAERTLLLDC…FQGCCPDLCS (122 aa)). One can recognise a Tyrosine-protein phosphatase domain in the interval 172–313 (GPVEILPYLF…LLQFETQVLC (142 aa)). The active-site Phosphocysteine intermediate is the Cys257.

This sequence belongs to the protein-tyrosine phosphatase family. Non-receptor class dual specificity subfamily. As to quaternary structure, interacts with MAPK14; this interaction does not lead to catalytic activation of DUSP2 and dephosphrylation of MAPK14. In terms of tissue distribution, expressed in hematopoietic tissues.

It localises to the nucleus. It catalyses the reaction O-phospho-L-tyrosyl-[protein] + H2O = L-tyrosyl-[protein] + phosphate. It carries out the reaction O-phospho-L-threonyl-[protein] + H2O = L-threonyl-[protein] + phosphate. Its function is as follows. Dephosphorylates both phosphorylated Thr and Tyr residues in MAPK1, and dephosphorylation of phosphotyrosine is slightly faster than that of phosphothreonine. Can dephosphorylate MAPK1. The polypeptide is Dual specificity protein phosphatase 2 (Homo sapiens (Human)).